The sequence spans 448 residues: MERIKFDYSKALPFVSEREVAYFENFVRSAHDMLHNKTGAGNDFVGWVDLPVNYDREEFARIKAAAEKIKSDSDALVVIGIGGSYLGARAAIEMLSHSFHNLMPKSKRNAPEIYFVGNNISSTYIADLLEVIEGKEISVNVISKSGTTTEPAIAFRIFKEYMENKYGKDGASKRIYATTDKEKGALRKLATEEGYETFVVPDDIGGRFSVLTAVGLLPIAVAGIDIDSMMKGAADARELYSNPNLMENDCYKYAAVRNALYRKNKTIEIMVNYEPSLHYFTEWWKQLYGESEGKDQKGIFPAGVDFTTDLHSMGQYIQDGLRNIFETVIRVEKPRKNIVIKEEKDNLDGLNFIAGKDVDYVNKKAMEGTVLAHTDGGVPNLVVTVPELSAYYFGNMVYFFEKACGISGYLLGVNPFDQPGVEAYKKNMFALLGKPGYEEQRKKLEERL.

Residue glutamate 290 is the Proton donor of the active site. Residues histidine 311 and lysine 425 contribute to the active site.

Belongs to the GPI family.

It is found in the cytoplasm. It carries out the reaction alpha-D-glucose 6-phosphate = beta-D-fructose 6-phosphate. Its pathway is carbohydrate biosynthesis; gluconeogenesis. It participates in carbohydrate degradation; glycolysis; D-glyceraldehyde 3-phosphate and glycerone phosphate from D-glucose: step 2/4. Functionally, catalyzes the reversible isomerization of glucose-6-phosphate to fructose-6-phosphate. The chain is Glucose-6-phosphate isomerase from Acetivibrio thermocellus (strain ATCC 27405 / DSM 1237 / JCM 9322 / NBRC 103400 / NCIMB 10682 / NRRL B-4536 / VPI 7372) (Clostridium thermocellum).